Consider the following 228-residue polypeptide: Uridylate kinase (228 aa).

9 to 10 (GS) contributes to the ATP binding site. Glycine 44 lines the UMP pocket. Residues glycine 45 and arginine 49 each contribute to the ATP site. Residues aspartate 66 and 114–120 (IVAAQTT) each bind UMP. ATP contacts are provided by threonine 140, tyrosine 146, and aspartate 149.

Belongs to the UMP kinase family. Homohexamer.

It localises to the cytoplasm. It catalyses the reaction UMP + ATP = UDP + ADP. It participates in pyrimidine metabolism; CTP biosynthesis via de novo pathway; UDP from UMP (UMPK route): step 1/1. With respect to regulation, inhibited by UTP. Functionally, catalyzes the reversible phosphorylation of UMP to UDP. The protein is Uridylate kinase of Haloarcula marismortui (strain ATCC 43049 / DSM 3752 / JCM 8966 / VKM B-1809) (Halobacterium marismortui).